Here is a 369-residue protein sequence, read N- to C-terminus: Thyroid hormone receptor beta (369 aa).

Positions M1–L14 are modulating. The Zn(2+) site is built by C15, C18, C32, C35, C53, C59, C69, and C72. 2 consecutive NR C4-type zinc fingers follow at residues C15–C35 and C53–C77. The nuclear receptor DNA-binding region spans C15–D89. An NR LBD domain is found at E125–D369. 3,3',5-triiodo-L-thyronine contacts are provided by R190, N239, and H343. The L-thyroxine site is built by R190, N239, and H343.

Belongs to the nuclear hormone receptor family. NR1 subfamily.

The protein resides in the nucleus. Its function is as follows. Nuclear hormone receptor that can act as a repressor or activator of transcription. High affinity receptor for thyroid hormones, including triiodothyronine and thyroxine. The polypeptide is Thyroid hormone receptor beta (THRB) (Cairina moschata (Muscovy duck)).